A 769-amino-acid chain; its full sequence is 5-methyltetrahydropteroyltriglutamate--homocysteine methyltransferase (769 aa).

Residues 16-19 (RELK) and K118 each bind 5-methyltetrahydropteroyltri-L-glutamate. Residues 440-442 (IGS) and E493 contribute to the L-homocysteine site. L-methionine contacts are provided by residues 440–442 (IGS) and E493. Residues 524–525 (RC) and W570 each bind 5-methyltetrahydropteroyltri-L-glutamate. Residue D608 participates in L-homocysteine binding. D608 serves as a coordination point for L-methionine. Position 614 (E614) interacts with 5-methyltetrahydropteroyltri-L-glutamate. 3 residues coordinate Zn(2+): H650, C652, and E674. The active-site Proton donor is the H706. A Zn(2+)-binding site is contributed by C738.

The protein belongs to the vitamin-B12 independent methionine synthase family. Requires Zn(2+) as cofactor.

The catalysed reaction is 5-methyltetrahydropteroyltri-L-glutamate + L-homocysteine = tetrahydropteroyltri-L-glutamate + L-methionine. The protein operates within amino-acid biosynthesis; L-methionine biosynthesis via de novo pathway; L-methionine from L-homocysteine (MetE route): step 1/1. In terms of biological role, catalyzes the transfer of a methyl group from 5-methyltetrahydrofolate to homocysteine resulting in methionine formation. This Acidiphilium cryptum (strain JF-5) protein is 5-methyltetrahydropteroyltriglutamate--homocysteine methyltransferase.